The chain runs to 188 residues: Elongation factor P (188 aa).

Lys34 bears the N6-(3,6-diaminohexanoyl)-5-hydroxylysine mark.

It belongs to the elongation factor P family. In terms of processing, may be beta-lysylated on the epsilon-amino group of Lys-34 by the combined action of EpmA and EpmB, and then hydroxylated on the C5 position of the same residue by EpmC (if this protein is present). Lysylation is critical for the stimulatory effect of EF-P on peptide-bond formation. The lysylation moiety may extend toward the peptidyltransferase center and stabilize the terminal 3-CCA end of the tRNA. Hydroxylation of the C5 position on Lys-34 may allow additional potential stabilizing hydrogen-bond interactions with the P-tRNA.

It localises to the cytoplasm. Its pathway is protein biosynthesis; polypeptide chain elongation. In terms of biological role, involved in peptide bond synthesis. Alleviates ribosome stalling that occurs when 3 or more consecutive Pro residues or the sequence PPG is present in a protein, possibly by augmenting the peptidyl transferase activity of the ribosome. Modification of Lys-34 is required for alleviation. This is Elongation factor P from Actinobacillus pleuropneumoniae serotype 5b (strain L20).